Consider the following 452-residue polypeptide: Coiled-coil domain-containing protein 71 (452 aa).

Residues 81–106 (PSQTKLQARAPTPAATSPPASAPQTA) are disordered. A compositionally biased stretch (low complexity) spans 87 to 106 (QARAPTPAATSPPASAPQTA). Phosphoserine is present on serine 129. Disordered regions lie at residues 209–256 (PLKV…GLQS) and 322–404 (AREV…LGPG). Positions 279–344 (KAAQAKAACA…QAKAKVARTQ (66 aa)) form a coiled coil. The segment covering 332 to 344 (KAVQAKAKVARTQ) has biased composition (low complexity). Residues 377–386 (RTEEAKDLSP) are compositionally biased toward basic and acidic residues.

The sequence is that of Coiled-coil domain-containing protein 71 (CCDC71) from Bos taurus (Bovine).